We begin with the raw amino-acid sequence, 130 residues long: Small ribosomal subunit protein uS11c (130 aa).

This sequence belongs to the universal ribosomal protein uS11 family. In terms of assembly, part of the 30S ribosomal subunit.

The protein localises to the plastid. The protein resides in the chloroplast. The chain is Small ribosomal subunit protein uS11c from Chara vulgaris (Common stonewort).